The chain runs to 72 residues: MDLWVVILVGVVALLAGVALGFFIARKYMMSYLKKNPPINEQMLRMMMMQMGMKPSQKKINQMMKAMNNQAK.

A helical transmembrane segment spans residues 4 to 24; that stretch reads WVVILVGVVALLAGVALGFFI.

Belongs to the UPF0154 family.

The protein resides in the cell membrane. This is UPF0154 protein BPUM_1692 from Bacillus pumilus (strain SAFR-032).